Here is a 143-residue protein sequence, read N- to C-terminus: ATP synthase subunit b' (143 aa).

A helical transmembrane segment spans residues 6-26 (ATLPLMALQFLVLAVVLNAVF).

It belongs to the ATPase B chain family. In terms of assembly, F-type ATPases have 2 components, F(1) - the catalytic core - and F(0) - the membrane proton channel. F(1) has five subunits: alpha(3), beta(3), gamma(1), delta(1), epsilon(1). F(0) has four main subunits: a(1), b(1), b'(1) and c(10-14). The alpha and beta chains form an alternating ring which encloses part of the gamma chain. F(1) is attached to F(0) by a central stalk formed by the gamma and epsilon chains, while a peripheral stalk is formed by the delta, b and b' chains.

Its subcellular location is the cellular thylakoid membrane. In terms of biological role, f(1)F(0) ATP synthase produces ATP from ADP in the presence of a proton or sodium gradient. F-type ATPases consist of two structural domains, F(1) containing the extramembraneous catalytic core and F(0) containing the membrane proton channel, linked together by a central stalk and a peripheral stalk. During catalysis, ATP synthesis in the catalytic domain of F(1) is coupled via a rotary mechanism of the central stalk subunits to proton translocation. Functionally, component of the F(0) channel, it forms part of the peripheral stalk, linking F(1) to F(0). The b'-subunit is a diverged and duplicated form of b found in plants and photosynthetic bacteria. The chain is ATP synthase subunit b' from Gloeothece citriformis (strain PCC 7424) (Cyanothece sp. (strain PCC 7424)).